The primary structure comprises 321 residues: Urease accessory protein UreD (321 aa).

Belongs to the UreD family. As to quaternary structure, ureD, UreF and UreG form a complex that acts as a GTP-hydrolysis-dependent molecular chaperone, activating the urease apoprotein by helping to assemble the nickel containing metallocenter of UreC. The UreE protein probably delivers the nickel.

The protein localises to the cytoplasm. Functionally, required for maturation of urease via the functional incorporation of the urease nickel metallocenter. This is Urease accessory protein UreD from Photorhabdus laumondii subsp. laumondii (strain DSM 15139 / CIP 105565 / TT01) (Photorhabdus luminescens subsp. laumondii).